A 14507-amino-acid polypeptide reads, in one-letter code: Mucin-16 (14507 aa).

Positions 1-17 are enriched in low complexity; it reads MLKPSGLPGSSSPTRSL. Positions 1-138 are disordered; sequence MLKPSGLPGS…PRTRTSSTEG (138 aa). Over 1-14451 the chain is Extracellular; the sequence is MLKPSGLPGS…EPLTGNSDLP (14451 aa). 2 stretches are compositionally biased toward polar residues: residues 35 to 46 and 56 to 138; these read TGATLSPKTSTG and PFTS…STEG. A glycan (N-linked (GlcNAc...) asparagine) is linked at Asn139. Disordered regions lie at residues 160 to 180, 198 to 229, 265 to 287, 396 to 554, 655 to 674, 695 to 719, and 740 to 888; these read EKYTVPTETSTTEGDSTETPW, DSTASKENAPVSMTPAETTVTDSHTPGRTNPS, FSSPEPGSAGHSRISTSAPLSSS, LGGT…STSV, VSKTAAGSSPPGGTKPSYTM, SLGLTPLNTRHPFSSPEPDSAGHTK, and TSTF…RTTL. A compositionally biased stretch (low complexity) spans 166 to 178; the sequence is TETSTTEGDSTET. A compositionally biased stretch (polar residues) spans 212 to 229; the sequence is PAETTVTDSHTPGRTNPS. Low complexity-rich tracts occupy residues 276–287 and 396–413; these read SRISTSAPLSSS and LGGTSTSALTTTSPSTTL. Polar residues-rich tracts occupy residues 414 to 423, 431 to 441, and 460 to 478; these read VSEETNTHHS, GTLNTSMTPLE, and GFTTLDSKIRSPSQVSSSH. N-linked (GlcNAc...) asparagine glycosylation occurs at Asn434. Low complexity-rich tracts occupy residues 485–497 and 508–525; these read TTGSTSGRQSSST and ATTSSTSKASSWTSESTA. The segment covering 526–543 has biased composition (polar residues); it reads QQFSEPQHTQWVETSPSM. Polar residues-rich tracts occupy residues 696–706, 740–780, 787–796, and 805–821; these read LGLTPLNTRHP, TSTF…NAAT, NATSPLTHPS, and SVLTLSTSAETTDSPNI. A glycan (N-linked (GlcNAc...) asparagine) is linked at Asn787. The segment covering 823–846 has biased composition (low complexity); the sequence is PTGTLTSESSESPSTLSLPSVSGV. 2 stretches are compositionally biased toward polar residues: residues 847–860 and 869–888; these read KTTFSSSTPSTHLF and TSNPSVSQPETSVSRVRTTL. N-linked (GlcNAc...) asparagine glycans are attached at residues Asn930 and Asn957. 4 stretches are compositionally biased toward polar residues: residues 949 to 969, 1092 to 1101, 1124 to 1137, and 1301 to 1317; these read SQTNRDTFNDSAAPQSTTWPE, GSSTPGRTSQ, GTSSALTPQMTATH, and SGSSPEMTAPGETNTGS. Disordered stretches follow at residues 949 to 981, 1082 to 1101, 1121 to 1149, 1301 to 1378, 1593 to 1641, and 1704 to 1757; these read SQTNRDTFNDSAAPQSTTWPETSPRFKTGLPSA, VSPSQSMDAAGSSTPGRTSQ, PRDGTSSALTPQMTATHPPSPDPGSARST, SGSS…NLTS, LGTQ…SSSS, and LSES…SPTT. Low complexity predominate over residues 1318-1328; it reads TWDPTTYITTT. 5 stretches are compositionally biased toward polar residues: residues 1334–1347, 1368–1378, 1596–1613, 1621–1633, and 1704–1745; these read SSAQVSTPHSVRTL, PKISSSPNLTS, QGRSSSEATTFWKPSTDT, GPTNIQSTPPMDN, and LSES…GSQM. Asn1375 carries N-linked (GlcNAc...) asparagine glycosylation. N-linked (GlcNAc...) asparagine glycosylation occurs at Asn1633. Low complexity predominate over residues 1746-1757; that stretch reads STSIPLTSSPTT. N-linked (GlcNAc...) asparagine glycosylation is found at Asn1840, Asn1877, and Asn1890. The segment covering 1846 to 1908 has biased composition (polar residues); the sequence is DLSHGVHTSS…TEKSEVSSSI (63 aa). Disordered stretches follow at residues 1846-1930, 2010-2033, 2064-2140, and 2153-2177; these read DLSH…PGNR, VSASPTHENSVSSGSSTSSPYSSA, WPST…GASI, and RSDVSGLTSESTANPSLGTASSAGT. Composition is skewed to low complexity over residues 2019–2033 and 2064–2085; these read SVSSGSSTSSPYSSA and WPSTSLSEALSSGHSGVSNPSS. Residues 2111–2132 show a composition bias toward polar residues; the sequence is HGPQNTAASTLNTDASSVTGLS. N-linked (GlcNAc...) asparagine glycosylation is found at Asn2345 and Asn2375. 2 disordered regions span residues 2393 to 2455 and 2566 to 2591; these read PTSI…PFTI and SESKAIHSSPQTPTTPTSGANWETSA. 2 stretches are compositionally biased toward low complexity: residues 2417–2429 and 2566–2583; these read TSTTETNTATSPS and SESKAIHSSPQTPTTPTS. Residue Asn2737 is glycosylated (N-linked (GlcNAc...) asparagine). Disordered regions lie at residues 2789–2822, 2838–2885, 2901–3006, 3019–3052, 3083–3148, 3172–3235, 3251–3276, 3299–3392, 3415–3436, and 3462–3491; these read TTGSQGMASSGGIRSGSTHSTGTKTFSSLPLTMN, TATQ…TWGI, DTKS…AMTS, TGQAARSGSSSSPISLSTEKETSFLSPTASTSRK, TLNM…ASSI, SQAA…PETT, ALGSGSTSISHLPTGTTSPTKSPTEN, GTPG…KTET, TSRSVDEAYSSTSSWSDQTSGS, and VSLPSGDQGITSLTNPSGGKTSSASSVTSP. The segment covering 2803 to 2819 has biased composition (polar residues); that stretch reads SGSTHSTGTKTFSSLPL. Over residues 2864-2875 the composition is skewed to low complexity; sequence SASSSPSKAFAS. Composition is skewed to polar residues over residues 2876–2885 and 2901–2918; these read LTTAPPTWGI and DTKSASLPTPGQSLNTIP. Low complexity predominate over residues 2919–2931; it reads DSDASTASSSLSK. The segment covering 2942–2968 has biased composition (polar residues); it reads MTSTKAISASSFQSTGFTETPEGSASP. Over residues 3019–3035 the composition is skewed to low complexity; sequence TGQAARSGSSSSPISLS. Over residues 3041-3052 the composition is skewed to polar residues; the sequence is SFLSPTASTSRK. N-linked (GlcNAc...) asparagine glycosylation occurs at Asn3085. Residues 3107-3116 are compositionally biased toward low complexity; the sequence is TAETQTLTFT. Composition is skewed to polar residues over residues 3117-3132 and 3172-3181; these read PSETPTSLLPVSSPTE and SQAAQGNSTW. The N-linked (GlcNAc...) asparagine glycan is linked to Asn3178. The segment covering 3188 to 3200 has biased composition (low complexity); that stretch reads TGSSPAGTSPGSP. Polar residues-rich tracts occupy residues 3201–3214 and 3251–3261; these read EMSTTLKIMSSKEP and ALGSGSTSISH. Positions 3263 to 3274 are enriched in low complexity; it reads PTGTTSPTKSPT. Polar residues-rich tracts occupy residues 3299-3342 and 3360-3383; these read GTPG…TTGM and VSLSTSSNILEDPVTSPNSVSSLT. 2 stretches are compositionally biased toward low complexity: residues 3424–3436 and 3477–3491; these read SSTSSWSDQTSGS and PSGGKTSSASSVTSP. Asn3501 carries an N-linked (GlcNAc...) asparagine glycan. Residues 3538-3555 are compositionally biased toward low complexity; it reads ISTTITTMGTNSISTTTP. 8 disordered regions span residues 3538-3588, 3644-3672, 3794-3829, 3843-3879, 3914-3982, 4024-4056, 4094-4121, and 4138-4166; these read ISTT…STAA, TPSSDASAVKTETSTSERTLSPSDTTAST, RSSGVTFSRPDPTSKKAEQTSTQLPTTTSAHPGQVP, AKTPDATFQRQGQTALTTEARATSDSWNEKEKSTPSA, LESG…SPVV, MDTSSTTQTSIISSPGSTAITKGPRTEITSSKR, AMQTSPPGATSLSAPTLDTSATASWTGT, and FSKGPEDTSQPSPPSVEETSSSSSLVPIH. Composition is skewed to polar residues over residues 3812-3824 and 3848-3868; these read QTSTQLPTTTSAH and ATFQRQGQTALTTEARATSDS. The span at 3916–3927 shows a compositional bias: low complexity; the sequence is SGTTSSPSWKSS. A compositionally biased stretch (polar residues) spans 3946 to 3982; it reads PSTNTVETTGWVTSSEHASHSTIPAHSASSKLTSPVV. Over residues 4026 to 4041 the composition is skewed to low complexity; the sequence is TSSTTQTSIISSPGST. Polar residues predominate over residues 4095 to 4121; sequence MQTSPPGATSLSAPTLDTSATASWTGT. A compositionally biased stretch (low complexity) spans 4152 to 4164; the sequence is SVEETSSSSSLVP. N-linked (GlcNAc...) asparagine glycosylation is found at Asn4220, Asn4498, Asn4606, Asn4613, and Asn4624. Disordered stretches follow at residues 4728–4748, 4845–4961, and 5026–5066; these read VKDVSQTNPPFQDEASSPSSQ, HSTV…TRLS, and VSWT…KLSS. A compositionally biased stretch (polar residues) spans 4856-4876; sequence KVTSPNVTTSTMEDTTISRSI. Asn4861 is a glycosylation site (N-linked (GlcNAc...) asparagine). 2 stretches are compositionally biased toward low complexity: residues 4877–4914 and 4924–4939; these read PKSSKTTRTETETTSSLTPKLRETSISQEITSSTETST and TTEVSRTDVTSSSSTS. Composition is skewed to polar residues over residues 4944–4961 and 5026–5037; these read DQSTVSLDISTETNTRLS and VSWTSPPSVDKT. Positions 5038-5047 are enriched in low complexity; it reads SSPSSFLSSP. The span at 5048 to 5059 shows a compositional bias: polar residues; sequence AMTTPSLISSTL. N-linked (GlcNAc...) asparagine glycosylation is found at Asn5096, Asn5131, and Asn5228. Disordered stretches follow at residues 5128–5149, 5221–5249, and 5271–5303; these read VKANNSGHESHSPALADSETPK, EVSSTGVNSSSKISTPDHDKSTVPPDTFT, and TQASPPESASHSTLPLDTSTTLSQGGTHSTVTQ. Over residues 5221–5234 the composition is skewed to polar residues; that stretch reads EVSSTGVNSSSKIS. The segment covering 5280-5293 has biased composition (low complexity); sequence SHSTLPLDTSTTLS. Polar residues predominate over residues 5294 to 5303; sequence QGGTHSTVTQ. Residue Asn5320 is glycosylated (N-linked (GlcNAc...) asparagine). 7 disordered regions span residues 5328–5365, 5381–5400, 5426–5507, 5519–5538, 5624–5654, 5675–5696, and 5727–5747; these read PVEETSSVSSLMSSPAMTSPSPVSSTSPQSIPSSPLPV, GTTSPESVTSSPPNLSSITH, NVGT…TNTA, ASRTEISSSRTSISDLDRPT, PVEETSSGFSLMSPSMTSPSPVSSTSPESIP, LGTTSPEPVTSSPPNLSSPTQE, and ISGHESQSSVPADSHTSKATS. Composition is skewed to low complexity over residues 5333-5365 and 5381-5393; these read SSVSSLMSSPAMTSPSPVSSTSPQSIPSSPLPV and GTTSPESVTSSPP. The N-linked (GlcNAc...) asparagine glycan is linked to Asn5394. 2 stretches are compositionally biased toward polar residues: residues 5426–5441 and 5447–5485; these read NVGTSGSGHKSQSSVL and SKATPLMSTTSTLGDTSVSTSTPNISQTNQIQTEPTASL. An N-linked (GlcNAc...) asparagine glycan is attached at Asn5470. Low complexity-rich tracts occupy residues 5495-5504, 5520-5532, 5633-5654, and 5675-5688; these read SEKTSSTTET, SRTEISSSRTSIS, SLMSPSMTSPSPVSSTSPESIP, and LGTTSPEPVTSSPP. Asn5689 is a glycosylation site (N-linked (GlcNAc...) asparagine). The segment covering 5727-5737 has biased composition (polar residues); sequence ISGHESQSSVP. The N-linked (GlcNAc...) asparagine glycan is linked to Asn5863. Disordered regions lie at residues 5882 to 5931 and 6054 to 6078; these read STAS…SSPV and STSTPGSPETKNVDRDSTSPLTPEL. A compositionally biased stretch (polar residues) spans 5903–5916; it reads TTTMSRSTKGVSWQ. Residues 5917–5928 are compositionally biased toward low complexity; that stretch reads SPPSVEETSSPS. Residues 6054–6063 show a composition bias toward polar residues; the sequence is STSTPGSPET. Asn6088 carries an N-linked (GlcNAc...) asparagine glycan. Disordered regions lie at residues 6122–6149, 6219–6251, 6399–6425, 6438–6459, 6497–6545, and 6682–6714; these read PASAQSTKSPDISPEASSSHSNSPPLTI, NSLSSQAPLLVTTSPSPVTSTLQEHSTSSLVSV, SRTELTSSSRTSIQGTEKPTMSPDTST, TKSEERTIATQTGPHRATSQGT, ISGT…TSLP, and TTGATETSRTEVASSRRTSIPGPDHSTESPDIS. Composition is skewed to low complexity over residues 6134–6149, 6226–6251, and 6399–6410; these read SPEASSSHSNSPPLTI, PLLVTTSPSPVTSTLQEHSTSSLVSV, and SRTELTSSSRTS. Polar residues-rich tracts occupy residues 6411-6425 and 6445-6459; these read IQGTEKPTMSPDTST and IATQTGPHRATSQGT. Over residues 6500–6523 the composition is skewed to low complexity; it reads TSPPSVEKTSSSSSLLSLPAITSP. 2 stretches are compositionally biased toward polar residues: residues 6530 to 6545 and 6683 to 6699; these read LPESRPSSPVHLTSLP and TGATETSRTEVASSRRT. Asn6732 carries N-linked (GlcNAc...) asparagine glycosylation. Disordered stretches follow at residues 6800–6822, 6845–6865, and 6886–6939; these read SFSSSLMPSPAMTSPPVSSTLPK, TLGTSPEPTTSSPPNLSSTSH, and TAAT…SETT. Residues 6848-6864 show a composition bias toward low complexity; sequence TSPEPTTSSPPNLSSTS. Residue Asn6859 is glycosylated (N-linked (GlcNAc...) asparagine). Polar residues predominate over residues 6886-6905; that stretch reads TAATNVETTSSGHGSQSSVL. Positions 6919–6938 are enriched in low complexity; that stretch reads TTSTMGHTTVSTSMSVSSET. An N-linked (GlcNAc...) asparagine glycan is attached at Asn6961. 14 disordered regions span residues 6981–7004, 7028–7107, 7143–7208, 7279–7302, 7320–7345, 7360–7427, 7437–7456, 7463–7503, 7527–7553, 7577–7597, 7726–7782, 7825–7849, 7908–7927, and 7970–8000; these read AEVSRTEVTSSGRTSIPGPSQSTV, MTIP…ATTS, TSPE…TSKA, SRTEVTSSSRTSISGSAESTMLPE, ESSEMTIKTQTSPPGSTSESTFTLDT, QRLP…SLLT, LDASAEPETSSPPSLSSTSV, EVTT…ETTK, SNTRKIQSEPASSLTTRLRETSTSEET, TEAISFSRTSMSGPEQSTMSQ, ATTT…TTSS, LASSLTPGLRESSGSEGTSSGTKMS, HTSPLGATTQGTSTLDTSST, and PSFSLMSSPATTSPSPVSSTLPESISSSPLP. The segment covering 7028 to 7038 has biased composition (polar residues); that stretch reads MTIPTQTGPSG. Residues 7039–7055 are compositionally biased toward low complexity; sequence STSQDTLTLDTSTTKSQ. The segment covering 7057 to 7075 has biased composition (polar residues); the sequence is KTHSTLTQRFPHSEMTTLM. Low complexity predominate over residues 7086–7105; the sequence is SSPSLENPSSLPSLLSLPAT. Residues 7166-7200 are compositionally biased toward polar residues; it reads GKDTTNTEAVHPSTNTAASNVEIPSSGHESPSSAL. Positions 7279–7298 are enriched in low complexity; that stretch reads SRTEVTSSSRTSISGSAEST. Composition is skewed to polar residues over residues 7322 to 7345, 7360 to 7371, and 7390 to 7402; these read SEMTIKTQTSPPGSTSESTFTLDT, QRLPHSEITTLV, and SPPSSQLSLSAMI. 2 stretches are compositionally biased toward low complexity: residues 7403 to 7427 and 7439 to 7455; these read SPSPVSSTLPASSHSSSASVTSLLT and ASAEPETSSPPSLSSTS. The segment covering 7474–7484 has biased composition (polar residues); that stretch reads FSNTAVTKVGT. The segment covering 7485 to 7494 has biased composition (low complexity); sequence SSSGHESPSS. Residues 7733 to 7749 show a composition bias toward low complexity; that stretch reads GTSTEPGTSSSSSLSTT. Positions 7750 to 7765 are enriched in basic and acidic residues; it reads SHERLTTYKDTAHTEA. Residues 7768–7782 are compositionally biased toward polar residues; the sequence is PSTNTGGTNVATTSS. 3 stretches are compositionally biased toward low complexity: residues 7835–7846, 7915–7927, and 7973–8000; these read ESSGSEGTSSGT, TTQGTSTLDTSST, and SLMSSPATTSPSPVSSTLPESISSSPLP. Residues Asn8029 and Asn8055 are each glycosylated (N-linked (GlcNAc...) asparagine). Disordered regions lie at residues 8042–8078, 8111–8134, 8312–8331, 8342–8389, 8411–8472, 8604–8624, 8674–8741, and 8775–8880; these read EVTTDTEKTHPSSNRTVTDVGTSSSGHESTSFVLADS, IQTEPTSSLTLGLRKTSSSEGTSL, GISREPGTSSTSNLSSTSHE, TEDM…YTMG, TSSL…ISPD, MLRTSSEPETSSPPNLSSTSA, SPMA…TKVS, and TPLT…HSSP. The segment covering 8052–8078 has biased composition (polar residues); sequence PSSNRTVTDVGTSSSGHESTSFVLADS. The segment covering 8319–8328 has biased composition (low complexity); the sequence is TSSTSNLSST. A glycan (N-linked (GlcNAc...) asparagine) is linked at Asn8324. Positions 8345-8389 are enriched in polar residues; the sequence is MQPSTHTAVTNVRTSISGHESQSSVLSDSETPKATSPMGTTYTMG. Over residues 8607–8624 the composition is skewed to low complexity; sequence TSSEPETSSPPNLSSTSA. N-linked (GlcNAc...) asparagine glycans are attached at residues Asn8618 and Asn8684. Polar residues-rich tracts occupy residues 8674–8740 and 8781–8810; these read SPMA…TTKV and GSAEMTITPKTGHSGASSQGTFTLDTSSRA. The segment covering 8850-8880 has biased composition (low complexity); that stretch reads TSPPSSLVSLSAVTSPSPLYSTPSESSHSSP. Residue Asn8913 is glycosylated (N-linked (GlcNAc...) asparagine). 2 disordered regions span residues 8995–9018 and 9147–9168; these read ESTSTLTPTPRETSTSQEIHSATK and SLSSPVMTSSSPVSSTLPDSIH. Asn9202 carries N-linked (GlcNAc...) asparagine glycosylation. The segment covering 9294–9307 has biased composition (low complexity); sequence SISEETSSATEKST. The disordered stretch occupies residues 9294–9460; that stretch reads SISEETSSAT…TPSGSSHSSP (167 aa). Composition is skewed to polar residues over residues 9308–9357 and 9374–9412; these read VLSS…STPL and SGATSQGTFTLDSSSTASWPGTHSATTQRFPQSVVTTPM. Residues 9431–9460 are compositionally biased toward low complexity; sequence SPPSSLVSSSSVTSPSPLYSTPSGSSHSSP. N-linked (GlcNAc...) asparagine glycosylation occurs at Asn9493. Disordered stretches follow at residues 9611 to 9635, 9726 to 9753, 9771 to 9791, and 9869 to 9890; these read ATPEVSRTEVMPSSRTSIPGPAQST, SSSSLTSLPLTTSLSPVSSTLLDSSPSS, VLDTSSEPKTSSSPNLSSTSV, and TEPTFSLTPGFRETSTSEETTS. Residues 9621–9635 are compositionally biased toward polar residues; it reads MPSSRTSIPGPAQST. Low complexity-rich tracts occupy residues 9774 to 9790 and 9881 to 9890; these read TSSEPKTSSSPNLSSTS and ETSTSEETTS. An N-linked (GlcNAc...) asparagine glycan is attached at Asn9785. N-linked (GlcNAc...) asparagine glycans are attached at residues Asn10075 and Asn10173. Disordered regions lie at residues 10175–10218 and 10445–10469; these read SLDT…PPAS and TIRPVKGPQTSTSPASPKGLHTGGT. The span at 10178–10193 shows a compositional bias: low complexity; that stretch reads TSSVTPTNTPSSPGST. Residues 10194–10212 are compositionally biased toward polar residues; the sequence is HLLQSSKTDFTSSAKTSSP. An N-linked (GlcNAc...) asparagine glycan is attached at Asn10510. A compositionally biased stretch (polar residues) spans 10544 to 10573; sequence SLGAETSTALPRTTPSVFNRESETTASLVS. Disordered regions lie at residues 10544-10590 and 10689-10719; these read SLGA…DVSS and ETSSTIPRTIPNFSHHESDATPSIATSPGAE. Residue Asn10700 is glycosylated (N-linked (GlcNAc...) asparagine). Polar residues predominate over residues 10708 to 10719; that stretch reads ATPSIATSPGAE. N-linked (GlcNAc...) asparagine glycosylation is present at Asn10749. Residues 10849 to 10860 are compositionally biased toward polar residues; the sequence is TTPSMTTSHGAE. 3 disordered regions span residues 10849 to 10872, 10898 to 10926, and 11003 to 11036; these read TTPSMTTSHGAESSSAVPTPTVST, LSPGEPETTPSMATSHGEEASSAIPTPTV, and LPTLTLSPGEPETTPSMATSHGAEASSTVPTVSP. Over residues 10861 to 10872 the composition is skewed to low complexity; it reads SSSAVPTPTVST. Over residues 11003 to 11018 the composition is skewed to low complexity; it reads LPTLTLSPGEPETTPS. The N-linked (GlcNAc...) asparagine glycan is linked to Asn11053. The interval 11072–11092 is disordered; it reads SMATSHGAEASSAVPTPTVSP. N-linked (GlcNAc...) asparagine glycosylation is found at Asn11224 and Asn11263. 2 stretches are compositionally biased toward polar residues: residues 11269 to 11284 and 11358 to 11381; these read HPAESSSTLPRTTSRF and STTVPRTTPNYSHSEPDTTPSIAT. Disordered regions lie at residues 11269–11301, 11358–11400, 11508–11537, 11583–11724, 11836–11861, and 11913–11937; these read HPAESSSTLPRTTSRFSHSELDTMPSTVTSPEA, STTV…SPDV, KFSHSKSDTTLPVAITSPGPEASSAVSTTT, ETST…TSPR, SPTASPGVSAKTAPLSTHPGTETSTM, and QTVTSWNTETSPSVTSVGPPEFSRT. Residue Asn11367 is glycosylated (N-linked (GlcNAc...) asparagine). 3 stretches are compositionally biased toward polar residues: residues 11583-11594, 11631-11651, and 11658-11672; these read ETSTTVSGTIPN, VTSQVTSSATDTSTAIPTLTP, and TTASSATHPGTQTGF. Asn11594 is a glycosylation site (N-linked (GlcNAc...) asparagine). The segment covering 11700 to 11717 has biased composition (low complexity); it reads PVSRTTSSFSHSSPDATP. 2 stretches are compositionally biased toward polar residues: residues 11849–11861 and 11913–11928; these read PLSTHPGTETSTM and QTVTSWNTETSPSVTS. Repeat copies occupy residues 12067-12223, 12224-12381, 12382-12537, 12538-12692, 12693-12848, 12849-13004, 13005-13160, 13161-13316, 13317-13472, 13473-13628, 13629-13784, and 13785-13939. The 12 X approximate tandem repeats stretch occupies residues 12067–13939; that stretch reads AATVPFMVPF…FTINNLRYMA (1873 aa). The SEA 1 domain maps to 12072 to 12193; the sequence is FMVPFTLNFT…NSLYVNGFTH (122 aa). Residues Asn12079, Asn12100, and Asn12116 are each glycosylated (N-linked (GlcNAc...) asparagine). Residues Cys12126 and Cys12146 are joined by a disulfide bond. Asn12168 carries N-linked (GlcNAc...) asparagine glycosylation. Positions 12196–12226 are disordered; it reads SMPTTSTPGTSTVDVGTSGTPSSSPSPTTAG. The region spanning 12228–12349 is the SEA 2 domain; it reads LLMPFTLNFT…NSLYVNGFTH (122 aa). N-linked (GlcNAc...) asparagine glycosylation is found at Asn12235 and Asn12272. The cysteines at positions 12282 and 12302 are disulfide-linked. A disordered region spans residues 12353-12376; it reads VSTTSTPGTSTVDLRTSGTPSSLS. SEA domains follow at residues 12386 to 12507, 12542 to 12663, and 12697 to 12818; these read LLVP…GFTH and LLVL…GFTH. N-linked (GlcNAc...) asparagine glycans are attached at residues Asn12393, Asn12414, and Asn12430. Residues Cys12440 and Cys12460 are joined by a disulfide bond. Residues Asn12549, Asn12570, and Asn12586 are each glycosylated (N-linked (GlcNAc...) asparagine). Cys12596 and Cys12616 are disulfide-bonded. N-linked (GlcNAc...) asparagine glycans are attached at residues Asn12704, Asn12725, and Asn12741. The cysteines at positions 12751 and 12771 are disulfide-linked. Positions 12819–12834 are enriched in polar residues; the sequence is QTSAPNTSTPGTSTVD. The interval 12819 to 12849 is disordered; it reads QTSAPNTSTPGTSTVDLGTSGTPSSLPSPTS. Asn12824 carries an N-linked (GlcNAc...) asparagine glycan. Positions 12835-12849 are enriched in low complexity; the sequence is LGTSGTPSSLPSPTS. One can recognise an SEA 6 domain in the interval 12853-12974; that stretch reads LLVPFTLNFT…NSLYVNGFTH (122 aa). Residues Asn12860, Asn12881, and Asn12897 are each glycosylated (N-linked (GlcNAc...) asparagine). Cys12907 and Cys12927 are oxidised to a cystine. The segment covering 12978-12990 has biased composition (polar residues); sequence VAPTSTPGTSTVD. The disordered stretch occupies residues 12978-13003; sequence VAPTSTPGTSTVDLGTSGTPSSLPSP. The segment covering 12991–13003 has biased composition (low complexity); that stretch reads LGTSGTPSSLPSP. SEA domains are found at residues 13009-13130 and 13165-13286; these read LLVP…GFTH and LLVP…GFTQ. Residues Asn13016, Asn13037, and Asn13053 are each glycosylated (N-linked (GlcNAc...) asparagine). A disulfide bridge connects residues Cys13063 and Cys13083. Asn13172 and Asn13193 each carry an N-linked (GlcNAc...) asparagine glycan. An intrachain disulfide couples Cys13219 to Cys13239. Residues 13291–13313 are compositionally biased toward polar residues; that stretch reads PTTSTPGTFTVQPETSETPSSLP. Residues 13291–13317 are disordered; the sequence is PTTSTPGTFTVQPETSETPSSLPGPTA. 2 SEA domains span residues 13321-13442 and 13477-13598; these read VLLP…GFTH and LLVL…GFTQ. N-linked (GlcNAc...) asparagine glycans are attached at residues Asn13328, Asn13349, and Asn13365. An intrachain disulfide couples Cys13375 to Cys13395. Asn13484, Asn13505, and Asn13521 each carry an N-linked (GlcNAc...) asparagine glycan. A disulfide bridge links Cys13531 with Cys13551. Over residues 13603–13621 the composition is skewed to polar residues; it reads PTTSIPGTPTVDLGTSGTP. The disordered stretch occupies residues 13603–13625; it reads PTTSIPGTPTVDLGTSGTPVSKP. 4 SEA domains span residues 13633-13754, 13789-13909, 13922-14043, and 14073-14193; these read LLVL…GFTH, LLIL…GFTH, SEEP…GYNE, and HLKT…GYAP. Asn13640 and Asn13661 each carry an N-linked (GlcNAc...) asparagine glycan. The cysteines at positions 13687 and 13707 are disulfide-linked. Asn13733, Asn13744, Asn13796, Asn13816, Asn13832, Asn13929, and Asn13950 each carry an N-linked (GlcNAc...) asparagine glycan. Cysteines 13976 and 13996 form a disulfide. Residues Asn14080 and Asn14100 are each glycosylated (N-linked (GlcNAc...) asparagine). Cysteines 14126 and 14146 form a disulfide. N-linked (GlcNAc...) asparagine glycosylation is found at Asn14195, Asn14212, Asn14254, Asn14287, Asn14326, and Asn14363. 2 SEA domains span residues 14198-14309 and 14319-14438; these read IRGE…EMES and STQH…GYSP. A disulfide bridge links Cys14373 with Cys14393. Residues Asn14417 and Asn14423 are each glycosylated (N-linked (GlcNAc...) asparagine). A helical membrane pass occupies residues 14452–14472; that stretch reads FWAVILIGLAGLLGVITCLIC. Residues 14473-14507 lie on the Cytoplasmic side of the membrane; that stretch reads GVLVTTRRRKKEGEYNVQQQCPGYYQSHLDLEDLQ.

In terms of assembly, binds to MSLN. Binding to MSLN mediates heterotypic cell adhesion. This may contribute to the metastasis of ovarian cancer to the peritoneum by initiating cell attachment to the mesothelial epithelium via binding to MSLN. In terms of processing, heavily O-glycosylated; expresses both type 1 and type 2 core glycans. Heavily N-glycosylated; expresses primarily high mannose and complex bisecting type N-linked glycans. Post-translationally, may be phosphorylated. Phosphorylation of the intracellular C-terminal domain may induce proteolytic cleavage and the liberation of the extracellular domain into the extracellular space. In terms of processing, may contain numerous disulfide bridges. Association of several molecules of the secreted form may occur through interchain disulfide bridges providing an extraordinarily large gel-like matrix in the extracellular space or in the lumen of secretory ducts. In terms of tissue distribution, expressed in corneal and conjunctival epithelia (at protein level). Overexpressed in ovarian carcinomas and ovarian low malignant potential (LMP) tumors as compared to the expression in normal ovarian tissue and ovarian adenomas.

It localises to the cell membrane. The protein resides in the secreted. Its subcellular location is the extracellular space. In terms of biological role, thought to provide a protective, lubricating barrier against particles and infectious agents at mucosal surfaces. This Homo sapiens (Human) protein is Mucin-16.